The following is a 179-amino-acid chain: Replication restart protein DnaT (179 aa).

Residues 156–179 (GGLPKRDVNTVSEPDSQIPPGFRG) form a disordered region.

It belongs to the DnaT family. Homooligomerizes. Interacts with PriB. Component of the replication restart primosome. Primosome assembly occurs via a 'hand-off' mechanism. PriA binds to replication forks, subsequently PriB then DnaT bind; DnaT then displaces ssDNA to generate the helicase loading substrate.

Involved in the restart of stalled replication forks, which reloads the replicative helicase on sites other than the origin of replication. Can function in multiple replication restart pathways. Displaces ssDNA from a PriB-ssDNA complex. Probably forms a spiral filament on ssDNA. This is Replication restart protein DnaT from Escherichia coli O81 (strain ED1a).